The following is a 182-amino-acid chain: Endoribonuclease YbeY (182 aa).

Zn(2+) contacts are provided by H115, H119, and H125.

Belongs to the endoribonuclease YbeY family. The cofactor is Zn(2+).

The protein localises to the cytoplasm. In terms of biological role, single strand-specific metallo-endoribonuclease involved in late-stage 70S ribosome quality control and in maturation of the 3' terminus of the 16S rRNA. This is Endoribonuclease YbeY from Bifidobacterium longum (strain NCC 2705).